The sequence spans 263 residues: MAPK-interacting and spindle-stabilizing protein (263 aa).

Residues 13–238 form a disordered region; sequence GSPAPFLPSG…LGKQQGHNTT (226 aa). Pro residues-rich tracts occupy residues 14–34 and 140–155; these read SPAP…PYPG and GLQP…PPGP. Positions 156–165 are enriched in low complexity; that stretch reads SAASPGPGSL. Residues 176-189 are compositionally biased toward polar residues; sequence PSDSSNPESTLEST. Positions 202–213 are enriched in basic residues; sequence IKRRRSKKKSKR.

Belongs to the MISS family. As to quaternary structure, interacts with MAPK1. Phosphorylated in vitro by MAPK1.

It localises to the cytoplasm. Its subcellular location is the cytoskeleton. It is found in the spindle. Its function is as follows. Involved in the maintenance of the spindle integrity during the cytostatic factor (CSF) arrest of oocytes. The protein is MAPK-interacting and spindle-stabilizing protein (Mapk1ip1) of Mus musculus (Mouse).